The following is a 172-amino-acid chain: Lipoprotein signal peptidase (172 aa).

Transmembrane regions (helical) follow at residues 70 to 90 and 94 to 114; these read ERWL…AWIW and AKGD…NIAD. Residues aspartate 123 and aspartate 142 contribute to the active site. A helical transmembrane segment spans residues 134–154; that stretch reads PFLVFNVADAAITIGVLILVL.

It belongs to the peptidase A8 family.

The protein localises to the cell inner membrane. It carries out the reaction Release of signal peptides from bacterial membrane prolipoproteins. Hydrolyzes -Xaa-Yaa-Zaa-|-(S,diacylglyceryl)Cys-, in which Xaa is hydrophobic (preferably Leu), and Yaa (Ala or Ser) and Zaa (Gly or Ala) have small, neutral side chains.. The protein operates within protein modification; lipoprotein biosynthesis (signal peptide cleavage). This protein specifically catalyzes the removal of signal peptides from prolipoproteins. This chain is Lipoprotein signal peptidase, found in Rhizorhabdus wittichii (strain DSM 6014 / CCUG 31198 / JCM 15750 / NBRC 105917 / EY 4224 / RW1) (Sphingomonas wittichii).